The primary structure comprises 1117 residues: Cytospin-A (1117 aa).

Disordered regions lie at residues 1-176, 293-323, and 358-390; these read MKKA…NQIS, SLSP…GSVE, and SSDD…NASE. Low complexity predominate over residues 45–90; that stretch reads TAASLSKTKSSDDLLAGMAGGVTVTNGVKGKKSTCPSAAPSASAPA. Residues 93–117 show a composition bias toward polar residues; it reads TVENKSKISTGTASSTKRNTSTGNK. Basic and acidic residues-rich tracts occupy residues 120–131 and 158–171; these read SSTRERLRERTR and TATE…KSKS. A coiled-coil region spans residues 168-280; it reads KSKSDNQISD…LNALGFSLEQ (113 aa). The span at 293–303 shows a compositional bias: polar residues; sequence SLSPEITPGNQ. Over residues 358-377 the composition is skewed to low complexity; the sequence is SSDDALDAPSSSESEGIPSI. Residues S384, S385, and S389 each carry the phosphoserine modification. Coiled-coil stretches lie at residues 394–449 and 487–807; these read ACLT…MESL and RYME…RGRV. S868, S881, and S887 each carry phosphoserine. The disordered stretch occupies residues 919–1001; the sequence is RTSSASRPAS…SRIREERKDP (83 aa). Positions 946–956 are enriched in basic and acidic residues; that stretch reads RSSEEMKRDIS. Residues 971–990 are compositionally biased toward low complexity; sequence TTSPQLSLSSSPTASVTPTT. Residues 1011–1116 enclose the Calponin-homology (CH) domain; the sequence is GSKRNALLKW…YVTAIYKYFE (106 aa).

The protein belongs to the cytospin-A family. May interact with both microtubules and actin cytoskeleton.

Its subcellular location is the cytoplasm. The protein localises to the cytoskeleton. It is found in the spindle. It localises to the cell junction. The protein resides in the gap junction. In terms of biological role, involved in cytokinesis and spindle organization. May play a role in actin cytoskeleton organization and microtubule stabilization and hence required for proper cell adhesion and migration. The chain is Cytospin-A (SPECC1L) from Pan troglodytes (Chimpanzee).